Reading from the N-terminus, the 146-residue chain is Histone H2A.1 (146 aa).

The residue at position 1 (Met1) is an N-acetylmethionine. The disordered stretch occupies residues 1–24 (MDATKTTKGAGGRKGGPRKKSVTK). The SPKK motif motif lies at 142 to 145 (SPKK).

The protein belongs to the histone H2A family. As to quaternary structure, the nucleosome is a histone octamer containing two molecules each of H2A, H2B, H3 and H4 assembled in one H3-H4 heterotetramer and two H2A-H2B heterodimers. The octamer wraps approximately 147 bp of DNA. High expression in meristematic tissues, in cells of the root pericycle and in shoot cortical cells undergoing endoduplication of their DNA.

The protein localises to the nucleus. Its subcellular location is the chromosome. In terms of biological role, core component of nucleosome. Nucleosomes wrap and compact DNA into chromatin, limiting DNA accessibility to the cellular machineries which require DNA as a template. Histones thereby play a central role in transcription regulation, DNA repair, DNA replication and chromosomal stability. DNA accessibility is regulated via a complex set of post-translational modifications of histones, also called histone code, and nucleosome remodeling. The chain is Histone H2A.1 from Solanum lycopersicum (Tomato).